Consider the following 932-residue polypeptide: MRGKSRFSLGLVILAGALLFSLIGWGAGLYIEWLWFKTLNYQQVFLTRLTSEIGLRVLVGIIMFLLLLINLMLTRKSVLKAVESAKAFRPFQRDDDNVITINPNPQIDWREQITPGRLTLAFTLLSMALGFLYSSSVAGDWVTILQYFNQSSFNITDPIFNKNLGFYFFSLPFWHIVYRILASAIFLNIVLVALVYLVTDTARGGLAKIFRFPSARYHLSVLAALFFVIKSWGYRLDQYDLLYSSTGVVHGAGYTDIHATLLAYKALMILSLVTAIIIIANIFLNRFRLTAYAIGGLLVTSILLGSVYPAIIQKFVVLPNEFNREIPYIANNIKFSQQAYNLDKIEQKDFPAGRTLQAKDIQENKNTIDNIRLWDWQPLRQTYSQLQEMRLYYEFKNIDIDRYAIDEEYRQIMIAVREMNQDQLPQQAKTWINQRLKYTHGYGIAMSPVNEVSGEGLPHFFLKDIPPVASTNIKINRPEIYYGESDDGYVIVNTKTDEFDYPKGDGNSYSKYEGDSGVKVNSFFRKLLFAFTFADYKLLFTGDITNESQVLFYRNIKERIPKIAPFLSYDADPYPVINNQGEIYWMWDAYTISNMYPYSEPFDDRGNNYIRNSVKVTMNAYNGSVNFYISDAEDPIIKTYAKIFPGMFRPLSEMPEDLKKHIRYPEDMFLVQSRMYSLYHMTDPQVFYNREDKWTLPTEKVGEEEKAMDPYYTITVLPGEKNPEYLLIMPFNPQNKKNMIAWLGARSDGENYGKMVVYEFPKQELVYGPMQIEARIDQDTTISQQLSLWDQRGSSVIRGNLLVIPVEDSLLYVEPLYLQSEQSKMPELRRVIVASGDKIVMEPTLELALQKIYGEGAVLKDRPQQGVPPATDQPAGQQPAPEKTVKELAAEANRLYDDAQAKLKAGDWAGYGQSLNQLKDILTKLQNQSFSQ.

7 consecutive transmembrane segments (helical) span residues L11–I31, I53–L73, L118–A138, I180–D200, I209–I229, Y264–L284, and Y292–I312. Positions D861 to K883 are disordered.

Belongs to the UPF0182 family.

The protein resides in the cell membrane. This Desulforamulus reducens (strain ATCC BAA-1160 / DSM 100696 / MI-1) (Desulfotomaculum reducens) protein is UPF0182 protein Dred_1797.